A 354-amino-acid polypeptide reads, in one-letter code: MDENKQKALAAALGQIEKQFGKGSIMRLGDNRAMDVETISTGSLSLDIALGAGGLPMGRIVEIFGPESSGKTTLTLELIAAAQREGKTCAFIDAEHALDPVYAKKLGVNIDELLVSQPDTGEQALEICDALARSGAVDVIVVDSVAALTPKAEIEGEMGDSHMGLQARMLSQAMRKLTGNLKQSNCMCIFINQIRMKIGVMFGNPETTTGGNALKFYASVRLDIRRTGAIKEGEEVVGNETRIKVVKNKIAAPFKEANTQIMYGQGFNREGELIDLGVKHKMVEKSGAWYSYNGDKIGQGKANACKYLKENPEIAKTLDKKLREMLLNPENMQLTGETASAADDVEFGAVPEEF.

65-72 contributes to the ATP binding site; the sequence is GPESSGKT.

It belongs to the RecA family.

Its subcellular location is the cytoplasm. In terms of biological role, can catalyze the hydrolysis of ATP in the presence of single-stranded DNA, the ATP-dependent uptake of single-stranded DNA by duplex DNA, and the ATP-dependent hybridization of homologous single-stranded DNAs. It interacts with LexA causing its activation and leading to its autocatalytic cleavage. The polypeptide is Protein RecA (Vibrio cholerae serotype O1 (strain ATCC 39541 / Classical Ogawa 395 / O395)).